Here is an 83-residue protein sequence, read N- to C-terminus: Large ribosomal subunit protein bL31B (83 aa).

This sequence belongs to the bacterial ribosomal protein bL31 family. Type B subfamily. As to quaternary structure, part of the 50S ribosomal subunit.

The protein is Large ribosomal subunit protein bL31B of Lactobacillus gasseri (strain ATCC 33323 / DSM 20243 / BCRC 14619 / CIP 102991 / JCM 1131 / KCTC 3163 / NCIMB 11718 / NCTC 13722 / AM63).